The chain runs to 148 residues: FAD synthase (148 aa).

ATP is bound by residues 5–6, 10–13, Asp92, and Tyr119; these read TF and HPGH.

The protein belongs to the archaeal FAD synthase family. In terms of assembly, homodimer. A divalent metal cation serves as cofactor.

The catalysed reaction is FMN + ATP + H(+) = FAD + diphosphate. It functions in the pathway cofactor biosynthesis; FAD biosynthesis; FAD from FMN: step 1/1. Functionally, catalyzes the transfer of the AMP portion of ATP to flavin mononucleotide (FMN) to produce flavin adenine dinucleotide (FAD) coenzyme. This is FAD synthase from Methanosphaera stadtmanae (strain ATCC 43021 / DSM 3091 / JCM 11832 / MCB-3).